The sequence spans 338 residues: Ketol-acid reductoisomerase (NADP(+)) (338 aa).

In terms of domain architecture, KARI N-terminal Rossmann spans M1 to T181. NADP(+) contacts are provided by residues Y24–Q27, R47, and S52. Residue H107 is part of the active site. G133 contacts NADP(+). The region spanning T182–I327 is the KARI C-terminal knotted domain. Positions 190, 194, 226, and 230 each coordinate Mg(2+). Residue S251 participates in substrate binding.

This sequence belongs to the ketol-acid reductoisomerase family. Mg(2+) serves as cofactor.

The enzyme catalyses (2R)-2,3-dihydroxy-3-methylbutanoate + NADP(+) = (2S)-2-acetolactate + NADPH + H(+). The catalysed reaction is (2R,3R)-2,3-dihydroxy-3-methylpentanoate + NADP(+) = (S)-2-ethyl-2-hydroxy-3-oxobutanoate + NADPH + H(+). It functions in the pathway amino-acid biosynthesis; L-isoleucine biosynthesis; L-isoleucine from 2-oxobutanoate: step 2/4. It participates in amino-acid biosynthesis; L-valine biosynthesis; L-valine from pyruvate: step 2/4. Functionally, involved in the biosynthesis of branched-chain amino acids (BCAA). Catalyzes an alkyl-migration followed by a ketol-acid reduction of (S)-2-acetolactate (S2AL) to yield (R)-2,3-dihydroxy-isovalerate. In the isomerase reaction, S2AL is rearranged via a Mg-dependent methyl migration to produce 3-hydroxy-3-methyl-2-ketobutyrate (HMKB). In the reductase reaction, this 2-ketoacid undergoes a metal-dependent reduction by NADPH to yield (R)-2,3-dihydroxy-isovalerate. This is Ketol-acid reductoisomerase (NADP(+)) from Nitrosomonas eutropha (strain DSM 101675 / C91 / Nm57).